An 817-amino-acid chain; its full sequence is Phosphoenolpyruvate synthase (817 aa).

The active-site Tele-phosphohistidine intermediate is the H442. Residues R540, R587, E684, G706, T707, N708, and D709 each contribute to the substrate site. E684 contacts Mg(2+). Position 709 (D709) interacts with Mg(2+). The active-site Proton donor is the C756.

It belongs to the PEP-utilizing enzyme family. As to quaternary structure, homooctamer. The cofactor is Mg(2+).

It catalyses the reaction pyruvate + ATP + H2O = phosphoenolpyruvate + AMP + phosphate + 2 H(+). It participates in carbohydrate biosynthesis; gluconeogenesis. In terms of biological role, catalyzes the phosphorylation of pyruvate to phosphoenolpyruvate. The protein is Phosphoenolpyruvate synthase (ppsA) of Pyrococcus furiosus (strain ATCC 43587 / DSM 3638 / JCM 8422 / Vc1).